A 263-amino-acid polypeptide reads, in one-letter code: L-histidine 2-aminobutanoyltransferase (263 aa).

The protein belongs to the methyltransferase superfamily. CntL family. Interacts with CntM.

It carries out the reaction L-histidine + S-adenosyl-L-methionine = (2S)-2-amino-4-{[(1S)-1-carboxy-2-(1H-imidazol-4-yl)ethyl]amino}butanoate + S-methyl-5'-thioadenosine + H(+). Functionally, catalyzes the nucleophilic attack of one alpha-aminobutanoate moiety from SAM onto L-histidine to produce the intermediate (2S)-2-amino-4-{[(1S)-1-carboxy-2-(1H-imidazol-4-yl)ethyl]amino}butanoate. Functions in the biosynthesis of the metallophore pseudopaline, which is involved in the acquisition of nickel and zinc, and thus enables bacterial growth inside the host, where metal access is limited. Therefore, this enzyme probably contributes to Pseudomonas virulence. Cannot use D-histidine in place of L-histidine as substrate. In Pseudomonas aeruginosa (strain UCBPP-PA14), this protein is L-histidine 2-aminobutanoyltransferase.